We begin with the raw amino-acid sequence, 481 residues long: UDP-glycosyltransferase 71K2 (481 aa).

UDP-alpha-D-glucose is bound by residues Ser285, 350–351 (WA), 368–376 (HCGWNSILE), and 390–393 (YAEQ).

This sequence belongs to the UDP-glycosyltransferase family.

Glycosyltransferase that possesses chalcone and flavonol 2'-O-glycosyltransferase activity. Converts phloretin to phlorizin (phloretin 2'-O-glucoside), a potent antioxidant. Possesses glycosyltransferase activity toward quercetin, isoliquiritigenin, butein and caffeic acid. This is UDP-glycosyltransferase 71K2 from Pyrus communis (Pear).